Consider the following 274-residue polypeptide: tRNA-cytidine(32) 2-sulfurtransferase (274 aa).

Positions 40 to 45 (SGGKDS) match the PP-loop motif motif. 3 residues coordinate [4Fe-4S] cluster: Cys-115, Cys-118, and Cys-206.

The protein belongs to the TtcA family. Homodimer. Mg(2+) serves as cofactor. [4Fe-4S] cluster is required as a cofactor.

It localises to the cytoplasm. The catalysed reaction is cytidine(32) in tRNA + S-sulfanyl-L-cysteinyl-[cysteine desulfurase] + AH2 + ATP = 2-thiocytidine(32) in tRNA + L-cysteinyl-[cysteine desulfurase] + A + AMP + diphosphate + H(+). It functions in the pathway tRNA modification. Its function is as follows. Catalyzes the ATP-dependent 2-thiolation of cytidine in position 32 of tRNA, to form 2-thiocytidine (s(2)C32). The sulfur atoms are provided by the cysteine/cysteine desulfurase (IscS) system. The protein is tRNA-cytidine(32) 2-sulfurtransferase of Pseudomonas entomophila (strain L48).